Here is a 598-residue protein sequence, read N- to C-terminus: MANKKEYVVGIDLGTTNSVIAWMKPDSSVEVIPNAEGARTTPSIVAFSKTGEILVGEPAKRQLILNSERTIKSIKRKMGTDYKVKIDDKDYTPQEISAFILKKLKRDAEEYLGGEVKKAVITCPAYFNDAQRQATKEAGIIAGFEVLRIINEPTAAALAYGLDKKGKEEKVLVYDLGGGTFDVSILEIGDGVIQVVATSGNNHLGGDDFDQRIIDWLAEEFKKQHGVDLREDKQALQRLRDAAEKAKIELSSKLETDISLPYITATAEGPLHLEMRLTRSMFESLTRDLVEMTRKPVEQALSDAKLKPEDIDEIILVGGMTRVPMVQKFIKEIFGKDPNRGVNPDEAVAVGAAIQAAILAGEEGAQGKDIVLVDVTPLTLGIEVKGGLFEPIIPRNSTIPIKKSKVFTTAEDGQTEVEVRVYQGERPIAADNILLGSFRLVGIPPAPRGVPQIEVTFDIDSDGIVHVSAKDLGTGKEQSMVVSGRHQLSEDDINKIIEDAKKFEEQDKRRKEEVELKNKADDLAYYIEKSLKEYGDKIPADEKDKLENLVKDLRDAINKNDIPRIKMLFDELDREKTKIGEYIYKQNQQGGNQQAENQ.

The residue at position 180 (threonine 180) is a Phosphothreonine; by autocatalysis.

It belongs to the heat shock protein 70 family.

Its function is as follows. Acts as a chaperone. The chain is Chaperone protein DnaK from Thermosipho africanus (strain TCF52B).